The chain runs to 187 residues: Elongation factor P (187 aa).

This sequence belongs to the elongation factor P family.

The protein localises to the cytoplasm. It participates in protein biosynthesis; polypeptide chain elongation. In terms of biological role, involved in peptide bond synthesis. Stimulates efficient translation and peptide-bond synthesis on native or reconstituted 70S ribosomes in vitro. Probably functions indirectly by altering the affinity of the ribosome for aminoacyl-tRNA, thus increasing their reactivity as acceptors for peptidyl transferase. The protein is Elongation factor P of Thermodesulfovibrio yellowstonii (strain ATCC 51303 / DSM 11347 / YP87).